The primary structure comprises 403 residues: S-adenosylmethionine synthase (403 aa).

Position 17 (H17) interacts with ATP. Position 19 (D19) interacts with Mg(2+). E45 lines the K(+) pocket. Residues E58 and Q104 each coordinate L-methionine. Residues 104–114 (QSSDIAQGVNT) are flexible loop. ATP-binding positions include 179 to 181 (DGK), 250 to 251 (KF), D259, 265 to 266 (RK), A282, and K286. D259 lines the L-methionine pocket. An L-methionine-binding site is contributed by K290.

Belongs to the AdoMet synthase family. As to quaternary structure, homotetramer; dimer of dimers. Mg(2+) is required as a cofactor. The cofactor is K(+).

The protein resides in the cytoplasm. It catalyses the reaction L-methionine + ATP + H2O = S-adenosyl-L-methionine + phosphate + diphosphate. Its pathway is amino-acid biosynthesis; S-adenosyl-L-methionine biosynthesis; S-adenosyl-L-methionine from L-methionine: step 1/1. Functionally, catalyzes the formation of S-adenosylmethionine (AdoMet) from methionine and ATP. The overall synthetic reaction is composed of two sequential steps, AdoMet formation and the subsequent tripolyphosphate hydrolysis which occurs prior to release of AdoMet from the enzyme. This Mycobacterium leprae (strain Br4923) protein is S-adenosylmethionine synthase.